A 182-amino-acid chain; its full sequence is Isopentenyl-diphosphate Delta-isomerase (182 aa).

Positions 25 and 32 each coordinate Mn(2+). The 135-residue stretch at 30 to 164 (LLHLAFSSWL…PWAFSPWMVM (135 aa)) folds into the Nudix hydrolase domain. Residue Cys-67 is part of the active site. Position 67 (Cys-67) interacts with Mg(2+). His-69 contacts Mn(2+). Glu-87 is a binding site for Mg(2+). Mn(2+) is bound by residues Glu-114 and Glu-116. Glu-116 is an active-site residue.

The protein belongs to the IPP isomerase type 1 family. Homodimer. Requires Mg(2+) as cofactor. It depends on Mn(2+) as a cofactor.

The protein resides in the cytoplasm. The enzyme catalyses isopentenyl diphosphate = dimethylallyl diphosphate. It participates in isoprenoid biosynthesis; dimethylallyl diphosphate biosynthesis; dimethylallyl diphosphate from isopentenyl diphosphate: step 1/1. In terms of biological role, catalyzes the 1,3-allylic rearrangement of the homoallylic substrate isopentenyl (IPP) to its highly electrophilic allylic isomer, dimethylallyl diphosphate (DMAPP). This chain is Isopentenyl-diphosphate Delta-isomerase, found in Shigella boydii serotype 4 (strain Sb227).